The chain runs to 359 residues: Bergaptol O-methyltransferase (359 aa).

His-126 lines the bergaptol pocket. Positions 179, 203, 226, 246, and 260 each coordinate S-adenosyl-L-homocysteine. His-264 is a bergaptol binding site. The active-site Proton acceptor is His-264.

It belongs to the class I-like SAM-binding methyltransferase superfamily. Cation-independent O-methyltransferase family. COMT subfamily. Homodimer. Mostly expressed in roots and, to a lower extent, in stems and leaves.

It is found in the cytoplasm. The enzyme catalyses bergaptol + S-adenosyl-L-methionine = bergapten + S-adenosyl-L-homocysteine. The protein operates within aromatic compound metabolism. It functions in the pathway secondary metabolite biosynthesis. Its function is as follows. O-methyltransferase involved in the biosynthesis of furocoumarins natural products such as bergapten, a photosensitizer used for medical purpose such as treating psoriasis and vitiligo or facilitating resistance to microbial infection and other stresses. Catalyzes specifically the methylation of bergaptol. Not active on xanthotol, isoscopoletin, scopoletin and esculetin. The chain is Bergaptol O-methyltransferase from Kitagawia praeruptora (Peucedanum praeruptorum).